The chain runs to 708 residues: Solute carrier family 15 member 1 (708 aa).

Residues 1–21 (MGMSKSYGCFGYPLSIFFIVV) traverse the membrane as a helical segment. At 22 to 53 (NEFCERFSYYGMRALLILYFRRFIGWDDNLST) the chain is on the extracellular side. A glycan (N-linked (GlcNAc...) asparagine) is linked at asparagine 50. A helical transmembrane segment spans residues 54 to 74 (AIYHTFVALCYLTPILGALIA). Residues 75-82 (DSWLGKFK) lie on the Cytoplasmic side of the membrane. Residues 83 to 103 (TIVSLSIVYTIGQAVTAVSSI) traverse the membrane as a helical segment. Residues 104-118 (NDLTDYNKDGTPDNL) lie on the Extracellular side of the membrane. The N-linked (GlcNAc...) asparagine glycan is linked to asparagine 117. The chain crosses the membrane as a helical span at residues 119 to 139 (SVHVALSMIGLALIALGTGGI). Residues 140-161 (KPCVSAFGGDQFEEGQEKQRNR) lie on the Cytoplasmic side of the membrane. A helical membrane pass occupies residues 162-182 (FFSIFYLAINAGSLISTIVTP). The Extracellular segment spans residues 183–198 (MLRVHECGIYSQKACY). The chain crosses the membrane as a helical span at residues 199–219 (PLAFGVPAALMAVSLIVFVIG). The Cytoplasmic portion of the chain corresponds to 220–276 (SGMYKKFQPQGNVMGKVVKCIGFALKNRFRHRSKQFPKREHWLDWAKEKYDERLISQ). A helical membrane pass occupies residues 277–297 (IKMVTKVMFLYIPLPMFWALF). Topologically, residues 298 to 327 (DQQGSRWTLQATAMSGKIGLLEVQPDQMQT) are extracellular. The helical transmembrane segment at 328–348 (VNAILIVVMVPIMDAVVYPLI) threads the bilayer. Over 349–361 (AKCGFNFTSLKRM) the chain is Cytoplasmic. Residues 362 to 382 (TVGMFLASMAFVMAAIVQLEI) form a helical membrane-spanning segment. Over 383-584 (DKTLPVFPKQ…ISPNTVNMAL (202 aa)) the chain is Extracellular. The tract at residues 383–585 (DKTLPVFPKQ…SPNTVNMALQ (203 aa)) is extracellular domain (ECD). N-linked (GlcNAc...) asparagine glycans are attached at residues asparagine 408, asparagine 439, asparagine 495, asparagine 499, asparagine 509, asparagine 514, asparagine 527, and asparagine 539. The chain crosses the membrane as a helical span at residues 585–605 (QIPQYFLITCGEVVFSVTGLE). Residues 606–619 (FSYSQAPSNMKSVL) are Cytoplasmic-facing. A helical transmembrane segment spans residues 620-640 (QAGWLLTVAVGNIIVLIVAGA). Topologically, residues 641–645 (GQFSE) are extracellular. The chain crosses the membrane as a helical span at residues 646–666 (QWAEYILFAALLLVVCVIFAI). Over 667 to 708 (MARFYTYVNPAEIEAQFDDDEKKNLEKMNVYSTVTPVSQTQM) the chain is Cytoplasmic.

It belongs to the major facilitator superfamily. Proton-dependent oligopeptide transporter (POT/PTR) (TC 2.A.17) family. As to quaternary structure, interacts (via extracellular domain region) with trypsin.

Its subcellular location is the apical cell membrane. The enzyme catalyses a dipeptide(out) + H(+)(out) = a dipeptide(in) + H(+)(in). It catalyses the reaction an L-amino acid tripeptide(out) + H(+)(out) = an L-amino acid tripeptide(in) + H(+)(in). It carries out the reaction L-alanyl-L-lysine(out) + H(+)(out) = L-alanyl-L-lysine(in) + H(+)(in). The catalysed reaction is L-alanyl-L-proline(out) + H(+)(out) = L-alanyl-L-proline(in) + H(+)(in). The enzyme catalyses L-alanyl-L-valine(out) + H(+)(out) = L-alanyl-L-valine(in) + H(+)(in). It catalyses the reaction carnosine(out) + H(+)(out) = carnosine(in) + H(+)(in). It carries out the reaction glycyl-L-glutamine(out) + H(+)(out) = glycyl-L-glutamine(in) + H(+)(in). The catalysed reaction is glycyl-L-leucine(out) + H(+)(out) = glycyl-L-leucine(in) + H(+)(in). The enzyme catalyses glycyl-L-proline(out) + H(+)(out) = glycyl-L-proline(in) + H(+)(in). It catalyses the reaction glycyl-sarcosine(out) + H(+)(out) = glycyl-sarcosine(in) + H(+)(in). It carries out the reaction L-leucyl-L-leucine(out) + H(+)(out) = L-leucyl-L-leucine(in) + H(+)(in). The catalysed reaction is L-leucyl-L-proline(out) + H(+)(out) = L-leucyl-L-proline(in) + H(+)(in). The enzyme catalyses L-phenylalanyl-L-leucine(out) + H(+)(out) = L-phenylalanyl-L-leucine(in) + H(+)(in). It catalyses the reaction L-phenylalanyl-L-phenylalanine(out) + H(+)(out) = L-phenylalanyl-L-phenylalanine(in) + H(+)(in). It carries out the reaction L-lysyl-glycine(out) + H(+)(out) = L-lysyl-glycine(in) + H(+)(in). The catalysed reaction is L-tyrosylglycine(out) + H(+)(out) = L-tyrosylglycine(in) + H(+)(in). The enzyme catalyses L-alanyl-L-aspartate(out) + 2 H(+)(out) = L-alanyl-L-aspartate(in) + 2 H(+)(in). It catalyses the reaction L-aspartyl-glycine(out) + 2 H(+)(out) = L-aspartyl-glycine(in) + 2 H(+)(in). It carries out the reaction glycyl-L-aspartate(out) + 2 H(+)(out) = glycyl-L-aspartate(in) + 2 H(+)(in). The catalysed reaction is glycyl-L-glutamate(out) + 2 H(+)(out) = glycyl-L-glutamate(in) + 2 H(+)(in). The enzyme catalyses L-alanyl-L-leucyl-L-alanine(out) + H(+)(out) = L-alanyl-L-leucyl-L-alanine(in) + H(+)(in). It catalyses the reaction L-alanyl-L-prolylglycine(out) + H(+)(out) = L-alanyl-L-prolylglycine(in) + H(+)(in). It carries out the reaction glycylglycyl-L-isoleucine(out) + H(+)(out) = glycylglycyl-L-isoleucine(in) + H(+)(in). The catalysed reaction is glycylglycyl-L-proline(out) + H(+)(out) = glycylglycyl-L-proline(in) + H(+)(in). The enzyme catalyses L-methionyl-L-phenylalanyl-L-methionine(out) + H(+)(out) = L-methionyl-L-phenylalanyl-L-methionine(in) + H(+)(in). It catalyses the reaction N-acetyl-D-muramoyl-L-alanyl-D-isoglutamine(out) + 2 H(+)(out) = N-acetyl-D-muramoyl-L-alanyl-D-isoglutamine(in) + 2 H(+)(in). It carries out the reaction N(alpha)-formyl-L-methionyl-L-leucyl-L-phenylalanine(out) + 2 H(+)(out) = N(alpha)-formyl-L-methionyl-L-leucyl-L-phenylalanine(in) + 2 H(+)(in). Functionally, electrogenic proton-coupled amino-acid transporter that transports oligopeptides of 2 to 4 amino acids with a preference for dipeptides. Transports neutral and monovalently charged peptides with a proton to peptide stoichiometry of 1:1 or 2:1. Primarily responsible for the absorption of dietary di- and tripeptides from the small intestinal lumen. Mediates transepithelial transport of muramyl and N-formylated bacterial dipeptides contributing to recognition of pathogenic bacteria by the mucosal immune system. The sequence is that of Solute carrier family 15 member 1 (SLC15A1) from Canis lupus familiaris (Dog).